The chain runs to 218 residues: Nuclear cap-binding protein subunit 2 (218 aa).

Residues Y24, Y49, 118 to 122 (TIDLD), 129 to 133 (RQFGR), and 139 to 140 (QV) each bind mRNA. Residues 46 to 124 (ATIYVGNLSF…REITIDLDPG (79 aa)) enclose the RRM domain. Positions 176–194 (DPHKNHHHHHHGHHHHHGQ) are enriched in basic residues. A disordered region spans residues 176–200 (DPHKNHHHHHHGHHHHHGQPHAAAA).

Belongs to the RRM NCBP2 family. Component of the nuclear cap-binding complex (CBC).

The protein localises to the nucleus. In terms of biological role, component of the cap-binding complex (CBC) involved in the nuclear export of capped U snRNAs. The CBC complex is required for efficient pre-mRNA splicing through efficient commitment complex and spliceosome formation; and involved in rRNA processing at sites A0, A1 and A2. This Eremothecium gossypii (strain ATCC 10895 / CBS 109.51 / FGSC 9923 / NRRL Y-1056) (Yeast) protein is Nuclear cap-binding protein subunit 2 (CBC2).